The sequence spans 396 residues: Tryptophan synthase beta chain (396 aa).

Lys-86 is modified (N6-(pyridoxal phosphate)lysine).

The protein belongs to the TrpB family. As to quaternary structure, tetramer of two alpha and two beta chains. Requires pyridoxal 5'-phosphate as cofactor.

It carries out the reaction (1S,2R)-1-C-(indol-3-yl)glycerol 3-phosphate + L-serine = D-glyceraldehyde 3-phosphate + L-tryptophan + H2O. It participates in amino-acid biosynthesis; L-tryptophan biosynthesis; L-tryptophan from chorismate: step 5/5. Functionally, the beta subunit is responsible for the synthesis of L-tryptophan from indole and L-serine. This Francisella tularensis subsp. holarctica (strain FTNF002-00 / FTA) protein is Tryptophan synthase beta chain.